The sequence spans 66 residues: Large ribosomal subunit protein uL29 (66 aa).

This sequence belongs to the universal ribosomal protein uL29 family.

In Agrobacterium fabrum (strain C58 / ATCC 33970) (Agrobacterium tumefaciens (strain C58)), this protein is Large ribosomal subunit protein uL29.